The sequence spans 245 residues: Carbohydrate deacetylase (245 aa).

2 residues coordinate Mg(2+): His-59 and His-125.

It belongs to the YdjC deacetylase family. In terms of assembly, homodimer. It depends on Mg(2+) as a cofactor.

Probably catalyzes the deacetylation of acetylated carbohydrates an important step in the degradation of oligosaccharides. The sequence is that of Carbohydrate deacetylase from Listeria monocytogenes serotype 4b (strain CLIP80459).